Consider the following 449-residue polypeptide: Doublesex- and mab-3-related transcription factor A2 (449 aa).

The segment at residues 57 to 104 is a DNA-binding region (DM); the sequence is CARCRNHGVVSALKGHKRYCRWKDCMCAKCTLIAERQRVMAAQVALRR. The tract at residues 163–259 is disordered; sequence FPKTQLSGST…PSPSSAASRH (97 aa). Positions 166–187 are enriched in polar residues; the sequence is TQLSGSTTTQKSVGKPASTESD. Over residues 230–240 the composition is skewed to low complexity; it reads GSVSSLGSDSG. In terms of domain architecture, DMA spans 260–295; sequence MNAIDILTRVFPSHKRSVLELVLQGCGKDVVQAIEQ.

Belongs to the DMRT family. In terms of tissue distribution, expressed in brain and eye.

It is found in the nucleus. Functionally, may be involved in sexual development. The polypeptide is Doublesex- and mab-3-related transcription factor A2 (dmrta2) (Xiphophorus maculatus (Southern platyfish)).